The primary structure comprises 231 residues: Axial regulator YABBY 4 (231 aa).

The C4-type zinc-finger motif lies at 26–53; sequence CGFCTTILLVSVPFTSLSMVVTVRCGHC. 2 disordered regions span residues 98-120 and 211-231; these read KVNQ…EDED and NNGF…SPFE.

Belongs to the YABBY family. In terms of assembly, interacts with SPL/NZZ.

It localises to the nucleus. Its function is as follows. Essential for the formation and the abaxial-adaxial asymmetric growth of the ovule outer integument. In Arabidopsis thaliana (Mouse-ear cress), this protein is Axial regulator YABBY 4 (YAB4).